The sequence spans 696 residues: Probable transporter efuK (696 aa).

Residues 603–642 (SLNGGKMQGASDAKSKVEQGQRAMRKQDEQNGSKWEPVFF) are disordered. The span at 615–633 (AKSKVEQGQRAMRKQDEQN) shows a compositional bias: basic and acidic residues.

It belongs to the OSBP family.

Its function is as follows. Probable transporter; part of the gene cluster that mediates the biosynthesis of enfumafungin, a glycosylated fernene-type triterpenoid with potent antifungal activity, mediated by its interaction with beta-1,3-glucan synthase and the fungal cell wall. Might be involved in transport of enfumafungin to and across organelle membranes. This is Probable transporter efuK from Hormonema carpetanum.